Reading from the N-terminus, the 160-residue chain is Ureidoglycolate lyase (160 aa).

This sequence belongs to the ureidoglycolate lyase family. Homodimer. It depends on Ni(2+) as a cofactor.

The enzyme catalyses (S)-ureidoglycolate = urea + glyoxylate. Its pathway is nitrogen metabolism; (S)-allantoin degradation. Its function is as follows. Catalyzes the catabolism of the allantoin degradation intermediate (S)-ureidoglycolate, generating urea and glyoxylate. Involved in the utilization of allantoin as nitrogen source. The polypeptide is Ureidoglycolate lyase (Salmonella gallinarum (strain 287/91 / NCTC 13346)).